Here is a 139-residue protein sequence, read N- to C-terminus: Nuclear transcription factor Y subunit B-4 (139 aa).

A DNA-binding region spans residues L8–G14. Positions V35–V46 are subunit association domain (SAD). The segment covering Y90–T115 has biased composition (basic and acidic residues). Residues Y90–R139 are disordered. The span at R116–K125 shows a compositional bias: polar residues.

Belongs to the NFYB/HAP3 subunit family. As to quaternary structure, heterotrimeric transcription factor composed of three components, NF-YA, NF-YB and NF-YC. NF-YB and NF-YC must interact and dimerize for NF-YA association and DNA binding. As to expression, expressed in flowers, siliques and young rosettes.

The protein resides in the nucleus. Functionally, component of the NF-Y/HAP transcription factor complex. The NF-Y complex stimulates the transcription of various genes by recognizing and binding to a CCAAT motif in promoters. The chain is Nuclear transcription factor Y subunit B-4 (NFYB4) from Arabidopsis thaliana (Mouse-ear cress).